The primary structure comprises 100 residues: Small ribosomal subunit protein uS14c (100 aa).

The protein belongs to the universal ribosomal protein uS14 family. As to quaternary structure, part of the 30S ribosomal subunit.

The protein resides in the plastid. The protein localises to the chloroplast. In terms of biological role, binds 16S rRNA, required for the assembly of 30S particles. This Mesostigma viride (Green alga) protein is Small ribosomal subunit protein uS14c.